The following is a 43-amino-acid chain: Protein PsbN (43 aa).

Residues 7–24 traverse the membrane as a helical segment; the sequence is VAISISRSLVSFTGYALY.

Belongs to the PsbN family.

It localises to the plastid. The protein resides in the chloroplast thylakoid membrane. May play a role in photosystem I and II biogenesis. This chain is Protein PsbN, found in Ginkgo biloba (Ginkgo).